Here is an 86-residue protein sequence, read N- to C-terminus: Large ribosomal subunit protein bL31B (86 aa).

This sequence belongs to the bacterial ribosomal protein bL31 family. Type B subfamily. As to quaternary structure, part of the 50S ribosomal subunit.

The polypeptide is Large ribosomal subunit protein bL31B (Streptococcus agalactiae serotype III (strain NEM316)).